Here is a 370-residue protein sequence, read N- to C-terminus: 3-isopropylmalate dehydrogenase (370 aa).

Gly77–Glu90 contacts NAD(+). The substrate site is built by Arg97, Arg107, Arg135, and Asp226. The Mg(2+) site is built by Asp226, Asp250, and Asp254. Gly290–Asn302 contacts NAD(+).

Belongs to the isocitrate and isopropylmalate dehydrogenases family. LeuB type 1 subfamily. As to quaternary structure, homodimer. Mg(2+) serves as cofactor. The cofactor is Mn(2+).

Its subcellular location is the cytoplasm. It carries out the reaction (2R,3S)-3-isopropylmalate + NAD(+) = 4-methyl-2-oxopentanoate + CO2 + NADH. It functions in the pathway amino-acid biosynthesis; L-leucine biosynthesis; L-leucine from 3-methyl-2-oxobutanoate: step 3/4. Catalyzes the oxidation of 3-carboxy-2-hydroxy-4-methylpentanoate (3-isopropylmalate) to 3-carboxy-4-methyl-2-oxopentanoate. The product decarboxylates to 4-methyl-2 oxopentanoate. The sequence is that of 3-isopropylmalate dehydrogenase (leuB) from Agrobacterium fabrum (strain C58 / ATCC 33970) (Agrobacterium tumefaciens (strain C58)).